Here is a 384-residue protein sequence, read N- to C-terminus: Alanine racemase (384 aa).

K39 (proton acceptor; specific for D-alanine) is an active-site residue. K39 is modified (N6-(pyridoxal phosphate)lysine). R138 contributes to the substrate binding site. Residue Y265 is the Proton acceptor; specific for L-alanine of the active site. Residue M312 participates in substrate binding.

This sequence belongs to the alanine racemase family. The cofactor is pyridoxal 5'-phosphate.

The catalysed reaction is L-alanine = D-alanine. The protein operates within amino-acid biosynthesis; D-alanine biosynthesis; D-alanine from L-alanine: step 1/1. Functionally, catalyzes the interconversion of L-alanine and D-alanine. May also act on other amino acids. This chain is Alanine racemase (alr), found in Staphylococcus carnosus (strain TM300).